We begin with the raw amino-acid sequence, 81 residues long: Acyl carrier protein (81 aa).

In terms of domain architecture, Carrier spans 4–79; it reads DEVYSRVRKI…DAVNYILSKK (76 aa). Serine 39 carries the O-(pantetheine 4'-phosphoryl)serine modification.

Belongs to the acyl carrier protein (ACP) family. Post-translationally, 4'-phosphopantetheine is transferred from CoA to a specific serine of apo-ACP by AcpS. This modification is essential for activity because fatty acids are bound in thioester linkage to the sulfhydryl of the prosthetic group.

The protein localises to the cytoplasm. The protein operates within lipid metabolism; fatty acid biosynthesis. Carrier of the growing fatty acid chain in fatty acid biosynthesis. This Synechococcus sp. (strain JA-3-3Ab) (Cyanobacteria bacterium Yellowstone A-Prime) protein is Acyl carrier protein.